We begin with the raw amino-acid sequence, 205 residues long: Small ribosomal subunit protein uS4 (205 aa).

Positions 94 to 157 (SRLDTVVYRM…KQIPLIQESV (64 aa)) constitute an S4 RNA-binding domain.

The protein belongs to the universal ribosomal protein uS4 family. As to quaternary structure, part of the 30S ribosomal subunit. Contacts protein S5. The interaction surface between S4 and S5 is involved in control of translational fidelity.

Functionally, one of the primary rRNA binding proteins, it binds directly to 16S rRNA where it nucleates assembly of the body of the 30S subunit. In terms of biological role, with S5 and S12 plays an important role in translational accuracy. In Rickettsia conorii (strain ATCC VR-613 / Malish 7), this protein is Small ribosomal subunit protein uS4.